A 92-amino-acid chain; its full sequence is Probable Fe(2+)-trafficking protein (92 aa).

The protein belongs to the Fe(2+)-trafficking protein family.

Could be a mediator in iron transactions between iron acquisition and iron-requiring processes, such as synthesis and/or repair of Fe-S clusters in biosynthetic enzymes. This chain is Probable Fe(2+)-trafficking protein, found in Xanthomonas oryzae pv. oryzae (strain MAFF 311018).